Consider the following 570-residue polypeptide: MRVSKYLLSTQKETPANAEVISHQLMLRAGMIRRNASGLYSYLPTGLRVLRKVEAIVREEMNKAGAIEILMPMVQPADLWVETGRWDKFGPELLRFKDRHNRDFVLGPTHEEVITDLIRKEVSSYKQLPLNLYQIQTKFRDEVRPRFGVMRSREFLMKDAYSFHLDVDTMNETYEAMYQAYSNILSRMGLAFRPVLADTGSIGGSMSHEFHVLAQSGEDLIAYSTGSDYAANIEKAESPMPTEARGAATEELRLVDTPNAKTIAELVEQFGLDITKTVKTLIVKGATEEAPLVALIVRGDHELNEIKADKLDLVASPLEFAPEALIRDAIGAGPGSLGPVGLNMPIIIDHSVSVMSDFAAGANQDDKHYFGINWERDLPLAQAADIRNVVEGEPTPDGLGTYAMARGIEVGHIFQLGTNYSKSMNATVLDENGKSQVLLMGCYGVGVSRIVAAAIEQNFDDRGIVWPEAIAPFSVGILPMNMHKSHRVTDIAEQLYKDLSAAGIDVLLDDRKERPGVMFADMELIGIPHTVVIGDRNIDAGVFEYKNRRTGEKQDVPFDQIVDFLKNLQA.

It belongs to the class-II aminoacyl-tRNA synthetase family. ProS type 1 subfamily. Homodimer.

Its subcellular location is the cytoplasm. The enzyme catalyses tRNA(Pro) + L-proline + ATP = L-prolyl-tRNA(Pro) + AMP + diphosphate. Catalyzes the attachment of proline to tRNA(Pro) in a two-step reaction: proline is first activated by ATP to form Pro-AMP and then transferred to the acceptor end of tRNA(Pro). As ProRS can inadvertently accommodate and process non-cognate amino acids such as alanine and cysteine, to avoid such errors it has two additional distinct editing activities against alanine. One activity is designated as 'pretransfer' editing and involves the tRNA(Pro)-independent hydrolysis of activated Ala-AMP. The other activity is designated 'posttransfer' editing and involves deacylation of mischarged Ala-tRNA(Pro). The misacylated Cys-tRNA(Pro) is not edited by ProRS. The sequence is that of Proline--tRNA ligase from Shewanella sp. (strain MR-4).